The chain runs to 214 residues: UPF0301 protein blr1492 (214 aa).

Residues methionine 1–serine 22 are disordered.

The protein belongs to the UPF0301 (AlgH) family.

In Bradyrhizobium diazoefficiens (strain JCM 10833 / BCRC 13528 / IAM 13628 / NBRC 14792 / USDA 110), this protein is UPF0301 protein blr1492.